We begin with the raw amino-acid sequence, 161 residues long: 2-C-methyl-D-erythritol 2,4-cyclodiphosphate synthase (161 aa).

Residues Asp10 and His12 each contribute to the a divalent metal cation site. Residues 10–12 (DVH) and 36–37 (HS) contribute to the 4-CDP-2-C-methyl-D-erythritol 2-phosphate site. His44 contributes to the a divalent metal cation binding site. 4-CDP-2-C-methyl-D-erythritol 2-phosphate contacts are provided by residues 58–60 (DIG), 63–67 (FPDTD), 102–108 (AQVPKMA), 134–137 (TTTE), Phe141, and Arg144.

Belongs to the IspF family. In terms of assembly, homotrimer. A divalent metal cation serves as cofactor.

It carries out the reaction 4-CDP-2-C-methyl-D-erythritol 2-phosphate = 2-C-methyl-D-erythritol 2,4-cyclic diphosphate + CMP. Its pathway is isoprenoid biosynthesis; isopentenyl diphosphate biosynthesis via DXP pathway; isopentenyl diphosphate from 1-deoxy-D-xylulose 5-phosphate: step 4/6. Functionally, involved in the biosynthesis of isopentenyl diphosphate (IPP) and dimethylallyl diphosphate (DMAPP), two major building blocks of isoprenoid compounds. Catalyzes the conversion of 4-diphosphocytidyl-2-C-methyl-D-erythritol 2-phosphate (CDP-ME2P) to 2-C-methyl-D-erythritol 2,4-cyclodiphosphate (ME-CPP) with a corresponding release of cytidine 5-monophosphate (CMP). The polypeptide is 2-C-methyl-D-erythritol 2,4-cyclodiphosphate synthase (Shewanella baltica (strain OS223)).